Here is a 170-residue protein sequence, read N- to C-terminus: Protein Rex (170 aa).

Positions 1–16 are enriched in basic residues; it reads MPKTRRQRTRRARRNR. Disordered regions lie at residues 1-27 and 69-170; these read MPKT…SQDL and VQST…GEKP. The Nuclear localization signal, and RNA-binding (RxRE) signature appears at 2 to 19; sequence PKTRRQRTRRARRNRPPT. Residues 57–71 form a homomultimerization region; sequence PPAYIDMPSWPPVQS. Positions 82–95 are enriched in low complexity; sequence ALSALLSNTLSLAS. The Nuclear export signal signature appears at 83 to 94; it reads LSALLSNTLSLA. Positions 124 to 132 are homomultimerization; sequence PSFNQCEST. Positions 143-160 are enriched in low complexity; the sequence is PSGISSPPSPSPNLASVP. Serine 151 and serine 153 each carry phosphoserine; by host. Over residues 161-170 the composition is skewed to polar residues; that stretch reads KTSTPPGEKP.

The protein belongs to the deltaretrovirus Rex protein family. Homomultimer. Phosphorylation is essential for RNA-binding and function.

The protein resides in the host nucleus. Its subcellular location is the host nucleolus. The protein localises to the host cytoplasm. Functionally, rex escorts unspliced gag-pro-pol and singly spliced env mRNAs out of the nucleus of infected cells. These mRNAs carry a recognition sequence called Rex responsive element (RxRE or XRE) located at the 3' region of the long terminal repeat (LTR). This function is essential since most HTLV proteins are translated from unspliced or partially spliced pre-mRNAs that cannot exit the nucleus by the pathway used by fully processed cellular mRNAs. The polypeptide is Protein Rex (Human T-cell leukemia virus 2 (HTLV-2)).